Here is a 319-residue protein sequence, read N- to C-terminus: MNWLTNVVRPKIRNILKRETPDNLWIKCPDTGQLVFYKDVESNQFVIPGSNYHMRMSADARLKSIFDNETWYDVALPEVTADPLKFRDERKYVDRIRDARAKTGLHDSVKVGFGRLEGSAVVVAVQDFDFMGGSLGMAAGEAIVRGLELAVEKRCPFIVFAASGGARMQEGVLSLMQLPRTTVAVQMLREARQPYIVVLTNPTTGGVTASYAMLGDVQIAEPGALIGFAGARVIEQTIREKLPDGFQRAEYLRDHGMIDLVVHRHELRPTLARVCRLLTKAPEMIEQEPEPSAPVPPDEPDEPAATQEAPPAAPAAPPA.

The region spanning 24 to 293 is the CoA carboxyltransferase N-terminal domain; sequence LWIKCPDTGQ…MIEQEPEPSA (270 aa). Residues 282–319 form a disordered region; that stretch reads PEMIEQEPEPSAPVPPDEPDEPAATQEAPPAAPAAPPA.

The protein belongs to the AccD/PCCB family. Acetyl-CoA carboxylase is a heterohexamer composed of biotin carboxyl carrier protein (AccB), biotin carboxylase (AccC) and two subunits each of ACCase subunit alpha (AccA) and ACCase subunit beta (AccD).

The protein resides in the cytoplasm. It catalyses the reaction N(6)-carboxybiotinyl-L-lysyl-[protein] + acetyl-CoA = N(6)-biotinyl-L-lysyl-[protein] + malonyl-CoA. The protein operates within lipid metabolism; malonyl-CoA biosynthesis; malonyl-CoA from acetyl-CoA: step 1/1. Functionally, component of the acetyl coenzyme A carboxylase (ACC) complex. Biotin carboxylase (BC) catalyzes the carboxylation of biotin on its carrier protein (BCCP) and then the CO(2) group is transferred by the transcarboxylase to acetyl-CoA to form malonyl-CoA. The sequence is that of Acetyl-coenzyme A carboxylase carboxyl transferase subunit beta from Nitrobacter winogradskyi (strain ATCC 25391 / DSM 10237 / CIP 104748 / NCIMB 11846 / Nb-255).